The following is a 356-amino-acid chain: 3-dehydroquinate synthase (356 aa).

NAD(+) is bound by residues 71–76 (EGEASK), 105–109 (GVTGD), 129–130 (TS), lysine 142, and lysine 151. Positions 184, 247, and 264 each coordinate Zn(2+).

It belongs to the sugar phosphate cyclases superfamily. Dehydroquinate synthase family. Requires Co(2+) as cofactor. It depends on Zn(2+) as a cofactor. NAD(+) serves as cofactor.

Its subcellular location is the cytoplasm. The catalysed reaction is 7-phospho-2-dehydro-3-deoxy-D-arabino-heptonate = 3-dehydroquinate + phosphate. Its pathway is metabolic intermediate biosynthesis; chorismate biosynthesis; chorismate from D-erythrose 4-phosphate and phosphoenolpyruvate: step 2/7. Catalyzes the conversion of 3-deoxy-D-arabino-heptulosonate 7-phosphate (DAHP) to dehydroquinate (DHQ). The polypeptide is 3-dehydroquinate synthase (Lactococcus lactis subsp. cremoris (strain MG1363)).